Consider the following 144-residue polypeptide: Large ribosomal subunit protein uL11 (144 aa).

Belongs to the universal ribosomal protein uL11 family. In terms of assembly, part of the ribosomal stalk of the 50S ribosomal subunit. Interacts with L10 and the large rRNA to form the base of the stalk. L10 forms an elongated spine to which L12 dimers bind in a sequential fashion forming a multimeric L10(L12)X complex. One or more lysine residues are methylated.

In terms of biological role, forms part of the ribosomal stalk which helps the ribosome interact with GTP-bound translation factors. This is Large ribosomal subunit protein uL11 from Rhodococcus erythropolis (strain PR4 / NBRC 100887).